A 355-amino-acid polypeptide reads, in one-letter code: 12-oxophytodienoate reductase-like protein (355 aa).

Residues 30 to 32 (ALT), A63, and Q105 each bind FMN. 175–178 (NASS) is a substrate binding site. The Proton donor role is filled by Y181. R265 contributes to the substrate binding site. FMN contacts are provided by residues G288 and 309-310 (GR).

The protein belongs to the NADH:flavin oxidoreductase/NADH oxidase family. FMN is required as a cofactor. As to expression, weakly expressed in flowers and roots.

Its subcellular location is the cytoplasm. In terms of biological role, may be involved in the biosynthesis or metabolism of oxylipin signaling molecules. This Solanum lycopersicum (Tomato) protein is 12-oxophytodienoate reductase-like protein (OPR2).